A 348-amino-acid polypeptide reads, in one-letter code: Dihydroorotase (348 aa).

2 residues coordinate Zn(2+): His-17 and His-19. Substrate contacts are provided by residues 19–21 and Asn-45; that span reads HLR. Positions 103, 140, and 178 each coordinate Zn(2+). At Lys-103 the chain carries N6-carboxylysine. His-140 provides a ligand contact to substrate. A substrate-binding site is contributed by Leu-223. Asp-251 contacts Zn(2+). Residue Asp-251 is part of the active site. Positions 255 and 267 each coordinate substrate.

It belongs to the metallo-dependent hydrolases superfamily. DHOase family. Class II DHOase subfamily. In terms of assembly, homodimer. The cofactor is Zn(2+).

The catalysed reaction is (S)-dihydroorotate + H2O = N-carbamoyl-L-aspartate + H(+). It functions in the pathway pyrimidine metabolism; UMP biosynthesis via de novo pathway; (S)-dihydroorotate from bicarbonate: step 3/3. Catalyzes the reversible cyclization of carbamoyl aspartate to dihydroorotate. The sequence is that of Dihydroorotase from Klebsiella pneumoniae (strain 342).